Consider the following 628-residue polypeptide: MQLISFLSNPLFFCALLLKFRTIFAACDSSQFECDNGSCISQYDVCNGEKNCPDGSDETALTCVSQRQHCTKPYFQCTYGACVIGTAGCNGVNECADGSDETRLRCGNEDDIRQHDRRLQGNCKENEFKCPSGICLDKSNFLCDGKDDCADGTGFDESVELCGHMECPAYSFKCGTGGCISGSLSCNGENDCYDGSDEAPLLCNTTKKVTTPVVTETPLELLGCPLPLGDERPILTGDGSRVLTGPITRGTVRFSCKQGYVLEGEESSYCAKNKWSTSTIPKCVKYCSTAGEFDGYSTKALCTHNGQQVECRKPFHPPGTEVKFVCSTGFKTLSPLPEMRCMKGGYWNRGRQRCEQDCGQLATPIKQFSSGGYTINNTVVPWHVGLYVWHNEKDYHFQCGGSLLTPDLVITAAHCVYDEGTRLPYSYDTFRVIAAKFYRNYGETTPEEKRRDVRLIEIAPGYKGRTENYYQDLALLTLDEPFELSHVIRPICVTFASFAEKESVTDDVQGKFAGWNIENKHELQFVPAVSKSNSVCRRNLRDIQADKFCIFTQGKSLACQGDSGGGFTSELPTNAFSTWNTARHFLFGVISNAPNADQCAHSLTVMTNIQHFEDMILNAMNRSVETRS.

Positions 1 to 25 are cleaved as a signal peptide; the sequence is MQLISFLSNPLFFCALLLKFRTIFA. LDL-receptor class A domains lie at 26 to 64, 69 to 107, 122 to 163, and 166 to 204; these read ACDS…LTCV, HCTK…LRCG, NCKE…ELCG, and ECPA…LLCN. 12 cysteine pairs are disulfide-bonded: Cys27–Cys39, Cys34–Cys52, Cys46–Cys63, Cys70–Cys82, Cys77–Cys95, Cys89–Cys106, Cys123–Cys135, Cys130–Cys149, Cys143–Cys162, Cys167–Cys179, Cys174–Cys192, and Cys186–Cys203. Asn36 carries an N-linked (GlcNAc...) asparagine glycan. N-linked (GlcNAc...) asparagine glycosylation occurs at Asn204. 2 Sushi domains span residues 222-285 and 300-356; these read LGCP…KCVK and ALCT…RCEQ. Disulfide bonds link Cys224–Cys270, Cys256–Cys283, Cys302–Cys341, and Cys326–Cys354. Residues 369–621 enclose the Peptidase S1 domain; sequence SSGGYTINNT…FEDMILNAMN (253 aa). Asn376 carries an N-linked (GlcNAc...) asparagine glycan. Cysteines 399 and 415 form a disulfide. Active-site charge relay system residues include His414, Asp472, and Ser563. Residue Asn621 is glycosylated (N-linked (GlcNAc...) asparagine).

The protein belongs to the peptidase S1 family. Post-translationally, may be proteolytically cleaved via an autocatalytic mechanism.

It is found in the secreted. Its function is as follows. Serine protease that plays a key role in innate immunity by activating the Toll pathway in response to infection with Gram-positive bacteria and fungi. During Gram-positive infection, acts downstream of PGRP-SA and upstream of Grass and Spz, and therefore appears to function in a pathway that links detection of Gram-positive lysine-type peptidoglycans to Toll activation. Functions in a separate pathway to the psh-mediated activation of the Toll pathway. In Drosophila melanogaster (Fruit fly), this protein is Modular serine protease.